Consider the following 1208-residue polypeptide: MDLHMMNCELLATCSALGYLEGDTYHKEPDCLESVKDLIRYLRHEDETRDVRQQLGAAQILQSDLLPILTQHHQDKPLFDAVIRLMVNLTQPALLCFGNLPKEPSFRHHFLQVLTYLQAYKEAFASEKAFGVLSETLYELLQLGWEERQEEDNLLIERILLLVRNILHVPADLDQEKKIDDDASAHDQLLWAIHLSGLDDLLLFLASSSAEEQWSLHVLEIVSLMFRDQNPEQLAGVGQGRLAQERSADFAELEVLRQREMAEKKTRALQRGNRHSRFGGSYIVQGLKSIGERDLIFHKGLHNLRNYSSDLGKQPKKVPKRRQAARELSIQRRSALNVRLFLRDFCSEFLENCYNRLMGSVKDHLLREKAQQHDETYYMWALAFFMAFNRAASFRPGLVSETLSVRTFHFIEQNLTNYYEMMLTDRKEAASWARRMHLALKAYQELLATVNEMDISPDEAVRESSRIIKNNIFYVMEYRELFLALFRKFDERCQPRSFLRDLVETTHLFLKMLERFCRSRGNLVVQNKQKKRRKKKKKVLDQAIVSGNVPSSPEEVEAVWPALAEQLQCCAQNSELSMDSVVPFDAASEVPVEEQRAEAMVRIQDCLLAGQAPQALTLLRSAREVWPEGDVFGSQDISPEEEIQLLKQILSAPLPRQQGPEERGAEEEEEEEEEEEEELQVVQVSEKEFNFLDYLKRFACSTVVRAYVLLLRSYQQNSAHTNHCIVKMLHRLAHDLKMEALLFQLSVFCLFNRLLSDPAAGAYKELVTFAKYILGKFFALAAVNQKAFVELLFWKNTAVVREMTEGYGSLDDRSSSRRAPTWSPEEEAHLRELYLANKDVEGQDVVEAILAHLNTVPRTRKQIIHHLVQMGLADSVKDFQRKGTHIVLWTGDQELELQRLFEEFRDSDDVLGHIMKNITAKRSRARIVDKLLALGLVAERRELYKKRQKKLASSILPNGAESLKDFCQEDLEEEENLPEEDSEEEEEGGSEAEQVQGSLVLSNENLGQSLHQEGFSIPLLWLQNCLIRAADDREEDGCSQAVPLVPLTEENEEAMENEQFQQLLRKLGVRPPASGQETFWRIPAKLSPTQLRRAAASLSQPEEEQKLQPELQPKVPGEQGSDEEHCKEHRAQALRALLLAHKKKAGLASPEEEDAVGKEPLKAAPKKRQLLDSDEEQEEDEGRNRAPELGAPGIQKKKRYQIEDDEDD.

The interval 1–309 is required for homodimerization and for interaction with CRY1 and CHEK1; sequence MDLHMMNCEL…GLHNLRNYSS (309 aa). The residue at position 281 (Ser-281) is a Phosphoserine. A disordered region spans residues 655 to 679; the sequence is PRQQGPEERGAEEEEEEEEEEEEEL. Over residues 664–679 the composition is skewed to acidic residues; sequence GAEEEEEEEEEEEEEL. The segment at 816–954 is DNA-binding domain; that stretch reads SRRAPTWSPE…KKRQKKLASS (139 aa). Residues 971 to 990 show a composition bias toward acidic residues; it reads LEEEENLPEEDSEEEEEGGS. The disordered stretch occupies residues 971-994; the sequence is LEEEENLPEEDSEEEEEGGSEAEQ. The tract at residues 1000 to 1098 is interaction with PARP1; that stretch reads VLSNENLGQS…TQLRRAAASL (99 aa). Phosphoserine occurs at positions 1074 and 1087. Phosphothreonine is present on Thr-1089. Disordered regions lie at residues 1091–1131 and 1143–1208; these read LRRA…EHRA and KKAG…DEDD. Residues 1122 to 1131 show a composition bias toward basic and acidic residues; sequence DEEHCKEHRA. Residues Ser-1149 and Ser-1173 each carry the phosphoserine modification. A compositionally biased stretch (acidic residues) spans 1172–1181; sequence DSDEEQEEDE. The interval 1182-1199 is required for nuclear localization; sequence GRNRAPELGAPGIQKKKR.

The protein belongs to the timeless family. In terms of assembly, monomer. Homodimer or homomultimer. Component of the circadian core oscillator, which includes the CRY proteins, CLOCK or NPAS2, ARTNL/BMAL1 or ARTNL2/BMAL2, CSKN1D and/or CSNK1E, TIMELESS, and the PER proteins. Interacts with PER2. The interaction with PER2 is direct and via its second PAS domain. Interacts directly with PER1 and PER3. Interacts with CRY2, CHEK1, ATR and ATRIP. Interacts with CRY1. Interacts with CLSPN; the interaction is required for leading-strand replication. Interacts (via N-terminus) with TIPIN. The TIMELESS-TIPIN heterodimer binds preferably to guanine-rich quadruplex-forming (G4) DNA structures. Associates with the MCM2-7 complex. Interacts with DNA polymerases alpha, delta and epsilon. Interacts with DDX11; this interaction increases recruitment of both proteins onto chromatin in response to replication stress induction by hydroxyurea. Interacts with PARP1; interaction is direct and independent of poly-ADP-ribose. In terms of tissue distribution, expressed in all tissues examined including brain, heart, lung, liver, skeletal muscle, kidney, placenta, pancreas, spleen, thymus and testis. Highest levels of expression in placenta, pancreas, thymus and testis.

The protein localises to the nucleus. It localises to the chromosome. Its function is as follows. Plays an important role in the control of DNA replication, maintenance of replication fork stability, maintenance of genome stability throughout normal DNA replication, DNA repair and in the regulation of the circadian clock. Required to stabilize replication forks during DNA replication by forming a complex with TIPIN: this complex regulates DNA replication processes under both normal and stress conditions, stabilizes replication forks and influences both CHEK1 phosphorylation and the intra-S phase checkpoint in response to genotoxic stress. During DNA replication, inhibits the CMG complex ATPase activity and activates DNA polymerases catalytic activities, coupling DNA unwinding and DNA synthesis. TIMELESS promotes TIPIN nuclear localization. Plays a role in maintaining processive DNA replication past genomic guanine-rich DNA sequences that form G-quadruplex (G4) structures, possibly together with DDX1. Involved in cell survival after DNA damage or replication stress by promoting DNA repair. In response to double-strand breaks (DSBs), accumulates at DNA damage sites and promotes homologous recombination repair via its interaction with PARP1. May be specifically required for the ATR-CHEK1 pathway in the replication checkpoint induced by hydroxyurea or ultraviolet light. Involved in the determination of period length and in the DNA damage-dependent phase advancing of the circadian clock. Negatively regulates CLOCK|NPAS2-ARTNL/BMAL1|ARTNL2/BMAL2-induced transactivation of PER1 possibly via translocation of PER1 into the nucleus. May play a role as destabilizer of the PER2-CRY2 complex. May also play an important role in epithelial cell morphogenesis and formation of branching tubules. This is Protein timeless homolog from Homo sapiens (Human).